The sequence spans 548 residues: Cilia- and flagella-associated protein 97 (548 aa).

Serine 8 and serine 19 each carry phosphoserine. 3 disordered regions span residues 85-297 (NYLT…RQEN), 407-431 (LSRQ…PPKL), and 497-548 (YSPL…LRSH). Residues 91–107 (GNERKPKFPSKEQHVEN) show a composition bias toward basic and acidic residues. Low complexity predominate over residues 112–121 (TRSPSLLTSS). A compositionally biased stretch (acidic residues) spans 152 to 161 (DYYTDGEESS). Threonine 155 carries the phosphothreonine modification. Serine 160 and serine 161 each carry phosphoserine. Low complexity predominate over residues 191–209 (KASSSSLSSSSSRSSSDCS). Positions 214–237 (DMQNKPDSGSSGKRVSSVTPSSPK) are enriched in polar residues. Serine 235 carries the post-translational modification Phosphoserine. Residues 238 to 248 (QKCKSGRKSSA) are compositionally biased toward basic residues. A Phosphoserine modification is found at serine 259. Positions 264 to 289 (TDVTPASTPDSSPAQPFELSQSQNQK) are enriched in polar residues. Positions 383–460 (RKNYSFTREE…ALLKRLEAVK (78 aa)) form a coiled coil. 2 stretches are compositionally biased toward polar residues: residues 504–514 (SRTSSATSGLS) and 537–548 (IQCSNSKVLRSH).

The protein belongs to the CFAP97 family.

The chain is Cilia- and flagella-associated protein 97 from Rattus norvegicus (Rat).